The chain runs to 430 residues: Long-chain specific acyl-CoA dehydrogenase, mitochondrial (430 aa).

Residues 1–30 (MATRLLRGSLRLWGGLCAPRLPTASRCSHS) constitute a mitochondrion transit peptide. Lys42 carries the post-translational modification N6-acetyllysine. Phosphoserine occurs at positions 54 and 55. N6-acetyllysine; alternate is present on residues Lys66 and Lys81. N6-succinyllysine; alternate is present on residues Lys66 and Lys81. Lys92 and Lys95 each carry N6-acetyllysine. Lys165 carries the post-translational modification N6-succinyllysine. FAD is bound by residues 170–179 (IAMTEPGAGS) and 203–205 (FIT). Residue Ser179 coordinates substrate. 227 to 228 (AH) lines the substrate pocket. At Lys240 the chain carries N6-succinyllysine. N6-acetyllysine; alternate is present on residues Lys254 and Lys279. 2 positions are modified to N6-succinyllysine; alternate: Lys254 and Lys279. Substrate contacts are provided by residues Tyr282 and 289–292 (PQER). Glu291 serves as the catalytic Proton acceptor. Arg317 is an FAD binding site. Lys318 carries the N6-acetyllysine modification. Lys322 carries the post-translational modification N6-acetyllysine; alternate. Lys322 carries the N6-succinyllysine; alternate modification. Gln328 is an FAD binding site. Position 358 is an N6-acetyllysine (Lys358). Position 362 is a phosphoserine (Ser362). An FAD-binding site is contributed by 385–389 (QLHGG). 412–413 (GG) is a binding site for substrate. 414 to 416 (TNE) serves as a coordination point for FAD.

This sequence belongs to the acyl-CoA dehydrogenase family. In terms of assembly, homotetramer. The cofactor is FAD. Post-translationally, acetylation at Lys-318 and Lys-322 in proximity of the cofactor-binding sites strongly reduces catalytic activity. These sites are deacetylated by SIRT3.

The protein resides in the mitochondrion matrix. The catalysed reaction is a long-chain 2,3-saturated fatty acyl-CoA + oxidized [electron-transfer flavoprotein] + H(+) = a long-chain (2E)-enoyl-CoA + reduced [electron-transfer flavoprotein]. It carries out the reaction hexanoyl-CoA + oxidized [electron-transfer flavoprotein] + H(+) = (2E)-hexenoyl-CoA + reduced [electron-transfer flavoprotein]. The enzyme catalyses octanoyl-CoA + oxidized [electron-transfer flavoprotein] + H(+) = (2E)-octenoyl-CoA + reduced [electron-transfer flavoprotein]. It catalyses the reaction decanoyl-CoA + oxidized [electron-transfer flavoprotein] + H(+) = (2E)-decenoyl-CoA + reduced [electron-transfer flavoprotein]. The catalysed reaction is dodecanoyl-CoA + oxidized [electron-transfer flavoprotein] + H(+) = (2E)-dodecenoyl-CoA + reduced [electron-transfer flavoprotein]. It carries out the reaction tetradecanoyl-CoA + oxidized [electron-transfer flavoprotein] + H(+) = (2E)-tetradecenoyl-CoA + reduced [electron-transfer flavoprotein]. The enzyme catalyses oxidized [electron-transfer flavoprotein] + hexadecanoyl-CoA + H(+) = (2E)-hexadecenoyl-CoA + reduced [electron-transfer flavoprotein]. It catalyses the reaction octadecanoyl-CoA + oxidized [electron-transfer flavoprotein] + H(+) = (2E)-octadecenoyl-CoA + reduced [electron-transfer flavoprotein]. The catalysed reaction is eicosanoyl-CoA + oxidized [electron-transfer flavoprotein] + H(+) = (2E)-eicosenoyl-CoA + reduced [electron-transfer flavoprotein]. It carries out the reaction docosanoyl-CoA + oxidized [electron-transfer flavoprotein] + H(+) = (2E)-docosenoyl-CoA + reduced [electron-transfer flavoprotein]. The enzyme catalyses tetracosanoyl-CoA + oxidized [electron-transfer flavoprotein] + H(+) = (2E)-tetracosenoyl-CoA + reduced [electron-transfer flavoprotein]. It catalyses the reaction (5E)-tetradecenoyl-CoA + oxidized [electron-transfer flavoprotein] + H(+) = (2E,5E)-tetradecadienoyl-CoA + reduced [electron-transfer flavoprotein]. The catalysed reaction is (5Z)-tetradecenoyl-CoA + oxidized [electron-transfer flavoprotein] + H(+) = (2E,5Z)-tetradecadienoyl-CoA + reduced [electron-transfer flavoprotein]. It carries out the reaction oxidized [electron-transfer flavoprotein] + (9Z)-octadecenoyl-CoA + H(+) = (2E,9Z)-octadecadienoyl-CoA + reduced [electron-transfer flavoprotein]. The protein operates within lipid metabolism; mitochondrial fatty acid beta-oxidation. Functionally, long-chain specific acyl-CoA dehydrogenase is one of the acyl-CoA dehydrogenases that catalyze the first step of mitochondrial fatty acid beta-oxidation, an aerobic process breaking down fatty acids into acetyl-CoA and allowing the production of energy from fats. The first step of fatty acid beta-oxidation consists in the removal of one hydrogen from C-2 and C-3 of the straight-chain fatty acyl-CoA thioester, resulting in the formation of trans-2-enoyl-CoA. Among the different mitochondrial acyl-CoA dehydrogenases, long-chain specific acyl-CoA dehydrogenase can act on saturated and unsaturated acyl-CoAs with 6 to 24 carbons with a preference for 8 to 18 carbons long primary chains. This Sus scrofa (Pig) protein is Long-chain specific acyl-CoA dehydrogenase, mitochondrial.